The chain runs to 262 residues: Tryptophan synthase alpha chain (262 aa).

Residues E49 and D60 each act as proton acceptor in the active site.

Belongs to the TrpA family. As to quaternary structure, tetramer of two alpha and two beta chains.

It catalyses the reaction (1S,2R)-1-C-(indol-3-yl)glycerol 3-phosphate + L-serine = D-glyceraldehyde 3-phosphate + L-tryptophan + H2O. The protein operates within amino-acid biosynthesis; L-tryptophan biosynthesis; L-tryptophan from chorismate: step 5/5. In terms of biological role, the alpha subunit is responsible for the aldol cleavage of indoleglycerol phosphate to indole and glyceraldehyde 3-phosphate. The chain is Tryptophan synthase alpha chain from Aquifex aeolicus (strain VF5).